A 306-amino-acid polypeptide reads, in one-letter code: Palmitoyl-protein thioesterase 1 (306 aa).

A signal peptide spans 1-27 (MASPSCLWLLAVALLPWTCAARALHHL). 3 disulfide bridges follow: Cys45/Cys46, Cys96/Cys128, and Cys152/Cys160. Ser115 is a catalytic residue. Asn197, Asn212, and Asn232 each carry an N-linked (GlcNAc...) asparagine glycan. Catalysis depends on residues Asp233 and His289.

This sequence belongs to the palmitoyl-protein thioesterase family. In terms of assembly, interacts with CLN5, ATP5F1A and ATP5F1B. Post-translationally, glycosylated.

It is found in the lysosome. The protein resides in the secreted. It localises to the golgi apparatus. The protein localises to the endoplasmic reticulum. It catalyses the reaction S-hexadecanoyl-L-cysteinyl-[protein] + H2O = L-cysteinyl-[protein] + hexadecanoate + H(+). The catalysed reaction is hexadecanoyl-CoA + H2O = hexadecanoate + CoA + H(+). The enzyme catalyses S-hexadecanoyl-N-acetylcysteamine + H2O = N-acetylcysteamine + hexadecanoate + H(+). It carries out the reaction S-hexadecanoyl-N-acetylcysteine methyl ester + H2O = N-acetylcysteine methyl ester + hexadecanoate + H(+). Its activity is regulated as follows. Palmitoylation reduces PPT1 enzymatic activity. Its function is as follows. Has thioesterase activity against fatty acid thioesters with 14 -18 carbons, including palmitoyl-CoA, S-palmitoyl-N-acetylcysteamine, and palmitoylated proteins. In contrast to PPT2, PPT1 can hydrolyze palmitoylated proteins and palmitoylcysteine. This is Palmitoyl-protein thioesterase 1 (PPT1) from Macaca fascicularis (Crab-eating macaque).